Here is a 126-residue protein sequence, read N- to C-terminus: Histone H2B type 2-B (126 aa).

The span at 1–12 shows a compositional bias: low complexity; the sequence is MPDPAKSAPAPK. A disordered region spans residues 1–36; sequence MPDPAKSAPAPKKGSKKAVTKVQKKDGKKRKRSRKE. Pro-2 bears the N-acetylproline mark. N6-(2-hydroxyisobutyryl)lysine; alternate is present on Lys-6. At Lys-6 the chain carries N6-(beta-hydroxybutyryl)lysine; alternate. Lys-6 carries the N6-acetyllysine; alternate modification. Lys-6 carries the N6-butyryllysine; alternate modification. At Lys-6 the chain carries N6-crotonyllysine; alternate. Lys-6 is modified (N6-lactoyllysine; alternate). Lys-6 participates in a covalent cross-link: Glycyl lysine isopeptide (Lys-Gly) (interchain with G-Cter in SUMO2); alternate. Ser-7 is modified (ADP-ribosylserine). Lys-12 carries the N6-(beta-hydroxybutyryl)lysine; alternate modification. 2 positions are modified to N6-acetyllysine; alternate: Lys-12 and Lys-13. N6-crotonyllysine; alternate occurs at positions 12 and 13. The residue at position 12 (Lys-12) is an N6-lactoyllysine; alternate. Lys-13 carries the post-translational modification N6-(2-hydroxyisobutyryl)lysine; alternate. Ser-15 bears the Phosphoserine; by STK4/MST1 mark. N6-acetyllysine; alternate is present on residues Lys-16, Lys-17, Lys-21, and Lys-24. Residues Lys-16, Lys-17, Lys-21, and Lys-24 each carry the N6-crotonyllysine; alternate modification. Residues Lys-16, Lys-17, Lys-21, and Lys-24 each carry the N6-lactoyllysine; alternate modification. Lys-17 carries the post-translational modification N6-glutaryllysine; alternate. Lys-21 and Lys-24 each carry N6-(2-hydroxyisobutyryl)lysine; alternate. Position 21 is an N6-(beta-hydroxybutyryl)lysine; alternate (Lys-21). An N6-butyryllysine; alternate modification is found at Lys-21. A Glycyl lysine isopeptide (Lys-Gly) (interchain with G-Cter in SUMO2); alternate cross-link involves residue Lys-21. At Lys-25 the chain carries N6-(2-hydroxyisobutyryl)lysine. N6-(2-hydroxyisobutyryl)lysine; alternate is present on Lys-35. Residue Lys-35 is modified to N6-(beta-hydroxybutyryl)lysine; alternate. Lys-35 is subject to N6-crotonyllysine; alternate. The residue at position 35 (Lys-35) is an N6-glutaryllysine; alternate. Lys-35 carries the N6-succinyllysine; alternate modification. Lys-35 is covalently cross-linked (Glycyl lysine isopeptide (Lys-Gly) (interchain with G-Cter in ubiquitin); alternate). Glu-36 carries the polyADP-ribosyl glutamic acid modification. Ser-37 carries the post-translational modification Phosphoserine; by AMPK. Residues Lys-44, Lys-47, and Lys-58 each carry the N6-(2-hydroxyisobutyryl)lysine; alternate modification. At Lys-44 the chain carries N6-lactoyllysine; alternate. 2 positions are modified to N6-glutaryllysine; alternate: Lys-44 and Lys-47. Lys-47 is modified (N6-methyllysine; alternate). Position 58 is an N6,N6-dimethyllysine; alternate (Lys-58). Residue Arg-80 is modified to Dimethylated arginine. Position 86 is an N6-(2-hydroxyisobutyryl)lysine; alternate (Lys-86). Residue Lys-86 is modified to N6-acetyllysine; alternate. An N6-lactoyllysine; alternate modification is found at Lys-86. Lys-86 carries the N6,N6,N6-trimethyllysine; alternate modification. Omega-N-methylarginine is present on residues Arg-87 and Arg-93. The residue at position 109 (Lys-109) is an N6-(2-hydroxyisobutyryl)lysine; alternate. Lys-109 is modified (N6-(beta-hydroxybutyryl)lysine; alternate). Lys-109 carries the N6-lactoyllysine; alternate modification. Lys-109 bears the N6-glutaryllysine; alternate mark. N6-methyllysine; alternate is present on Lys-109. Ser-113 carries an O-linked (GlcNAc) serine glycan. Position 116 is a phosphothreonine (Thr-116). N6-(2-hydroxyisobutyryl)lysine; alternate occurs at positions 117 and 121. At Lys-117 the chain carries N6-(beta-hydroxybutyryl)lysine; alternate. N6-lactoyllysine; alternate is present on residues Lys-117 and Lys-121. 2 positions are modified to N6-glutaryllysine; alternate: Lys-117 and Lys-121. 2 positions are modified to N6-succinyllysine; alternate: Lys-117 and Lys-121. Lys-117 carries the N6-methylated lysine; alternate modification. A Glycyl lysine isopeptide (Lys-Gly) (interchain with G-Cter in ubiquitin); alternate cross-link involves residue Lys-121.

The protein belongs to the histone H2B family. As to quaternary structure, the nucleosome is a histone octamer containing two molecules each of H2A, H2B, H3 and H4 assembled in one H3-H4 heterotetramer and two H2A-H2B heterodimers. The octamer wraps approximately 147 bp of DNA. Post-translationally, monoubiquitination at Lys-35 (H2BK34Ub) by the MSL1/MSL2 dimer is required for histone H3 'Lys-4' (H3K4me) and 'Lys-79' (H3K79me) methylation and transcription activation at specific gene loci, such as HOXA9 and MEIS1 loci. Similarly, monoubiquitination at Lys-121 (H2BK120Ub) by the RNF20/40 complex gives a specific tag for epigenetic transcriptional activation and is also prerequisite for histone H3 'Lys-4' and 'Lys-79' methylation. It also functions cooperatively with the FACT dimer to stimulate elongation by RNA polymerase II. H2BK120Ub also acts as a regulator of mRNA splicing: deubiquitination by USP49 is required for efficient cotranscriptional splicing of a large set of exons. In terms of processing, phosphorylated on Ser-15 (H2BS14ph) by STK4/MST1 during apoptosis; which facilitates apoptotic chromatin condensation. Also phosphorylated on Ser-15 in response to DNA double strand breaks (DSBs), and in correlation with somatic hypermutation and immunoglobulin class-switch recombination. Phosphorylation at Ser-37 (H2BS36ph) by AMPK in response to stress promotes transcription. GlcNAcylation at Ser-113 promotes monoubiquitination of Lys-121. It fluctuates in response to extracellular glucose, and associates with transcribed genes. Post-translationally, ADP-ribosylated by PARP1 or PARP2 on Ser-7 (H2BS6ADPr) in response to DNA damage. H2BS6ADPr promotes recruitment of CHD1L. Poly ADP-ribosylation on Glu-36 (H2BE35ADPr) by PARP1 regulates adipogenesis: it inhibits phosphorylation at Ser-37 (H2BS36ph), thereby blocking expression of pro-adipogenetic genes. In terms of processing, crotonylation (Kcr) is specifically present in male germ cells and marks testis-specific genes in post-meiotic cells, including X-linked genes that escape sex chromosome inactivation in haploid cells. Crotonylation marks active promoters and enhancers and confers resistance to transcriptional repressors. It is also associated with post-meiotically activated genes on autosomes. Hydroxybutyrylation of histones is induced by starvation. Post-translationally, lactylated in macrophages by EP300/P300 by using lactoyl-CoA directly derived from endogenous or exogenous lactate, leading to stimulates gene transcription.

The protein resides in the nucleus. It is found in the chromosome. Its function is as follows. Core component of nucleosome. Nucleosomes wrap and compact DNA into chromatin, limiting DNA accessibility to the cellular machineries which require DNA as a template. Histones thereby play a central role in transcription regulation, DNA repair, DNA replication and chromosomal stability. DNA accessibility is regulated via a complex set of post-translational modifications of histones, also called histone code, and nucleosome remodeling. This Mus musculus (Mouse) protein is Histone H2B type 2-B.